The following is a 101-amino-acid chain: Small ribosomal subunit protein uS14 (101 aa).

The segment at 51–70 is disordered; the sequence is LPRDSSPSRQRNRCRQTGRP.

The protein belongs to the universal ribosomal protein uS14 family. Part of the 30S ribosomal subunit. Contacts proteins S3 and S10.

In terms of biological role, binds 16S rRNA, required for the assembly of 30S particles and may also be responsible for determining the conformation of the 16S rRNA at the A site. The chain is Small ribosomal subunit protein uS14 from Salmonella arizonae (strain ATCC BAA-731 / CDC346-86 / RSK2980).